Reading from the N-terminus, the 132-residue chain is Holo-[acyl-carrier-protein] synthase (132 aa).

2 residues coordinate Mg(2+): D13 and E63.

The protein belongs to the P-Pant transferase superfamily. AcpS family. It depends on Mg(2+) as a cofactor.

The protein localises to the cytoplasm. It carries out the reaction apo-[ACP] + CoA = holo-[ACP] + adenosine 3',5'-bisphosphate + H(+). Its function is as follows. Transfers the 4'-phosphopantetheine moiety from coenzyme A to a Ser of acyl-carrier-protein. The chain is Holo-[acyl-carrier-protein] synthase from Gloeobacter violaceus (strain ATCC 29082 / PCC 7421).